A 296-amino-acid chain; its full sequence is Ribosomal RNA small subunit methyltransferase A (296 aa).

S-adenosyl-L-methionine-binding residues include N40, V42, G67, E88, D118, and N137.

It belongs to the class I-like SAM-binding methyltransferase superfamily. rRNA adenine N(6)-methyltransferase family. RsmA subfamily.

It is found in the cytoplasm. The enzyme catalyses adenosine(1518)/adenosine(1519) in 16S rRNA + 4 S-adenosyl-L-methionine = N(6)-dimethyladenosine(1518)/N(6)-dimethyladenosine(1519) in 16S rRNA + 4 S-adenosyl-L-homocysteine + 4 H(+). In terms of biological role, specifically dimethylates two adjacent adenosines (A1518 and A1519) in the loop of a conserved hairpin near the 3'-end of 16S rRNA in the 30S particle. May play a critical role in biogenesis of 30S subunits. The sequence is that of Ribosomal RNA small subunit methyltransferase A from Rhodococcus opacus (strain B4).